We begin with the raw amino-acid sequence, 62 residues long: U10-hottentoxin-Hj2a (62 aa).

A signal peptide spans 1–22; it reads MQKLLIILILFCILKFNVDVEG. 3 disulfides stabilise this stretch: Cys-28-Cys-46, Cys-33-Cys-59, and Cys-37-Cys-61.

This sequence belongs to the short scorpion toxin superfamily. Potassium channel inhibitor family. Alpha-KTx 23 subfamily. In terms of tissue distribution, expressed by the venom gland.

It is found in the secreted. May block potassium channels. The polypeptide is U10-hottentoxin-Hj2a (Hottentotta judaicus (Black scorpion)).